The primary structure comprises 402 residues: Acetate kinase (402 aa).

Asn7 contributes to the Mg(2+) binding site. Position 14 (Lys14) interacts with ATP. Arg95 lines the substrate pocket. Asp152 acts as the Proton donor/acceptor in catalysis. Residues His212–Gly216, Asp286–Arg288, and Gly334–Asn338 each bind ATP. Glu388 serves as a coordination point for Mg(2+).

The protein belongs to the acetokinase family. In terms of assembly, homodimer. Mg(2+) serves as cofactor. The cofactor is Mn(2+).

The protein localises to the cytoplasm. The catalysed reaction is acetate + ATP = acetyl phosphate + ADP. The protein operates within metabolic intermediate biosynthesis; acetyl-CoA biosynthesis; acetyl-CoA from acetate: step 1/2. Functionally, catalyzes the formation of acetyl phosphate from acetate and ATP. Can also catalyze the reverse reaction. This chain is Acetate kinase, found in Nitratidesulfovibrio vulgaris (strain DP4) (Desulfovibrio vulgaris).